The following is a 355-amino-acid chain: Holliday junction branch migration complex subunit RuvB (355 aa).

A large ATPase domain (RuvB-L) region spans residues threonine 4–tyrosine 190. ATP contacts are provided by residues leucine 29, arginine 30, glycine 71, lysine 74, threonine 75, threonine 76, glutamate 137–tyrosine 139, arginine 180, tyrosine 190, and arginine 227. Threonine 75 provides a ligand contact to Mg(2+). The segment at aspartate 191 to aspartate 261 is small ATPAse domain (RuvB-S). The segment at proline 264 to alanine 355 is head domain (RuvB-H). DNA-binding residues include arginine 300, arginine 319, and arginine 324.

This sequence belongs to the RuvB family. In terms of assembly, homohexamer. Forms an RuvA(8)-RuvB(12)-Holliday junction (HJ) complex. HJ DNA is sandwiched between 2 RuvA tetramers; dsDNA enters through RuvA and exits via RuvB. An RuvB hexamer assembles on each DNA strand where it exits the tetramer. Each RuvB hexamer is contacted by two RuvA subunits (via domain III) on 2 adjacent RuvB subunits; this complex drives branch migration. In the full resolvosome a probable DNA-RuvA(4)-RuvB(12)-RuvC(2) complex forms which resolves the HJ.

The protein resides in the cytoplasm. The enzyme catalyses ATP + H2O = ADP + phosphate + H(+). Functionally, the RuvA-RuvB-RuvC complex processes Holliday junction (HJ) DNA during genetic recombination and DNA repair, while the RuvA-RuvB complex plays an important role in the rescue of blocked DNA replication forks via replication fork reversal (RFR). RuvA specifically binds to HJ cruciform DNA, conferring on it an open structure. The RuvB hexamer acts as an ATP-dependent pump, pulling dsDNA into and through the RuvAB complex. RuvB forms 2 homohexamers on either side of HJ DNA bound by 1 or 2 RuvA tetramers; 4 subunits per hexamer contact DNA at a time. Coordinated motions by a converter formed by DNA-disengaged RuvB subunits stimulates ATP hydrolysis and nucleotide exchange. Immobilization of the converter enables RuvB to convert the ATP-contained energy into a lever motion, pulling 2 nucleotides of DNA out of the RuvA tetramer per ATP hydrolyzed, thus driving DNA branch migration. The RuvB motors rotate together with the DNA substrate, which together with the progressing nucleotide cycle form the mechanistic basis for DNA recombination by continuous HJ branch migration. Branch migration allows RuvC to scan DNA until it finds its consensus sequence, where it cleaves and resolves cruciform DNA. The protein is Holliday junction branch migration complex subunit RuvB of Burkholderia vietnamiensis (strain G4 / LMG 22486) (Burkholderia cepacia (strain R1808)).